A 405-amino-acid polypeptide reads, in one-letter code: F-box/kelch-repeat protein At2g43445 (405 aa).

Residues 7 to 53 enclose the F-box domain; the sequence is NTNSIYIVSELLEEIFLGLPLKSILKFKTVSKQWRSILESNLFVERR. 2 Kelch repeats span residues 146–197 and 356–400; these read RDKV…CVNG and THHD…VVGY.

The polypeptide is F-box/kelch-repeat protein At2g43445 (Arabidopsis thaliana (Mouse-ear cress)).